We begin with the raw amino-acid sequence, 148 residues long: Large ribosomal subunit protein bL9 (148 aa).

Belongs to the bacterial ribosomal protein bL9 family.

In terms of biological role, binds to the 23S rRNA. The protein is Large ribosomal subunit protein bL9 of Caldicellulosiruptor saccharolyticus (strain ATCC 43494 / DSM 8903 / Tp8T 6331).